A 181-amino-acid chain; its full sequence is Adenylyl-sulfate kinase (181 aa).

12–19 (GLSGAGKT) lines the ATP pocket. Ser86 serves as the catalytic Phosphoserine intermediate.

It belongs to the APS kinase family.

The catalysed reaction is adenosine 5'-phosphosulfate + ATP = 3'-phosphoadenylyl sulfate + ADP + H(+). It functions in the pathway sulfur metabolism; hydrogen sulfide biosynthesis; sulfite from sulfate: step 2/3. In terms of biological role, catalyzes the synthesis of activated sulfate. The polypeptide is Adenylyl-sulfate kinase (Rippkaea orientalis (strain PCC 8801 / RF-1) (Cyanothece sp. (strain PCC 8801))).